Consider the following 239-residue polypeptide: MGKPKFYDFCVHAVPDGENTVDQLSALARHLGYSGIALTNHSDKLPQSQPVLPSTNEFEVFKGIELVEENPSKLHGLIGKFRKSVDVLIVHGGSENVNRAALENPRVDILNHPAFAKSSGLNQVLAKSAAENDVAISLIIRPLLHSRGPRRVRLLSNLRANLDLARKYDVSLVLSSGAMSCFDLRSPMETLALAEVCGLEEDEALEAITVVPERIISRNRPGPGHVREGIEVLEEGDYS.

The protein belongs to the eukaryotic/archaeal RNase P protein component 3 family. As to quaternary structure, consists of a catalytic RNA component and at least 4-5 protein subunits.

The protein resides in the cytoplasm. It catalyses the reaction Endonucleolytic cleavage of RNA, removing 5'-extranucleotides from tRNA precursor.. Functionally, part of ribonuclease P, a protein complex that generates mature tRNA molecules by cleaving their 5'-ends. The protein is Ribonuclease P protein component 3 of Methanosarcina barkeri (strain Fusaro / DSM 804).